Here is a 115-residue protein sequence, read N- to C-terminus: U3-lycotoxin-Ls1r (115 aa).

The signal sequence occupies residues 1-20 (MKFVLLFGVLLVTLFSYSSA). A propeptide spanning residues 21 to 44 (EMLDDFHQADEDELVSLIKKEEAR) is cleaved from the precursor. Disulfide bonds link Cys-48-Cys-63, Cys-55-Cys-72, Cys-62-Cys-87, and Cys-74-Cys-85.

It belongs to the neurotoxin 19 (CSTX) family. 01 subfamily. In terms of tissue distribution, expressed by the venom gland.

Its subcellular location is the secreted. This chain is U3-lycotoxin-Ls1r, found in Lycosa singoriensis (Wolf spider).